The sequence spans 133 residues: Small ribosomal subunit protein uS8 (133 aa).

It belongs to the universal ribosomal protein uS8 family. Part of the 30S ribosomal subunit.

Functionally, one of the primary rRNA binding proteins, it binds directly to 16S rRNA central domain where it helps coordinate assembly of the platform of the 30S subunit. This is Small ribosomal subunit protein uS8 from Metallosphaera sedula (strain ATCC 51363 / DSM 5348 / JCM 9185 / NBRC 15509 / TH2).